The primary structure comprises 272 residues: 3',5'-cyclic adenosine monophosphate phosphodiesterase CpdA (272 aa).

Asp21, His23, Asp63, Asn93, His161, His200, and His202 together coordinate Fe cation. Residues His23, Asp63, and 93 to 94 (NH) contribute to the AMP site. His202 lines the AMP pocket.

The protein belongs to the cyclic nucleotide phosphodiesterase class-III family. As to quaternary structure, monomer. A divalent metal cation serves as cofactor.

It carries out the reaction 3',5'-cyclic AMP + H2O = AMP + H(+). Its activity is regulated as follows. Activated by iron. Other divalent metal ions have no effect. Hydrolyzes cAMP to 5'-AMP. Plays an important regulatory role in modulating the intracellular concentration of cAMP, thereby influencing cAMP-dependent processes. Specifically required for regulation of virulence factors. Can also hydrolyze cGMP, but cGMP is unlikely to be synthesized by P.aeruginosa and cAMP is probably the biologically relevant substrate for CpdA in vivo. In Pseudomonas aeruginosa, this protein is 3',5'-cyclic adenosine monophosphate phosphodiesterase CpdA.